Here is a 372-residue protein sequence, read N- to C-terminus: uncharacterized protein (372 aa).

Positions 1 to 24 (MSYYQIIVCILASISYIILLEVIA) are cleaved as a signal peptide. A PA domain is found at 92-215 (PNRNDTDASY…SSYNLLWSDL (124 aa)). The helical transmembrane segment at 236–256 (FWPFLLCFSPSIIMLITVQAL) threads the bilayer. Ser280 carries the phosphoserine modification. The RING-type; atypical zinc finger occupies 321-363 (CVICLESFTKGDKVVALPCKHEFHRPCIAKWIVDYRHACPTCN).

The protein localises to the golgi apparatus membrane. It is found in the vacuole membrane. This is an uncharacterized protein from Schizosaccharomyces pombe (strain 972 / ATCC 24843) (Fission yeast).